We begin with the raw amino-acid sequence, 542 residues long: Quinidine resistance protein 2 (542 aa).

The Cytoplasmic portion of the chain corresponds to 1-67 (MAGATSSIIR…SFKTVLIAQC (67 aa)). Serine 21 bears the Phosphoserine mark. Threonine 38 carries the post-translational modification Phosphothreonine. Serine 40 bears the Phosphoserine mark. A helical transmembrane segment spans residues 68-88 (AFTGFFSTIAGAIYYPVLSVI). Topologically, residues 89–100 (ERKFDIDEELVN) are extracellular. Residues 101 to 121 (VTVVVYFVFQGLAPTFMGGFA) form a helical membrane-spanning segment. Residues 122–127 (DSLGRR) lie on the Cytoplasmic side of the membrane. The helical transmembrane segment at 128 to 148 (PVVLVAIVIYFGACIGLACAQ) threads the bilayer. A topological domain (extracellular) is located at residue threonine 149. A helical membrane pass occupies residues 150-170 (YAQIIVLRCLQAAGISPVIAI). The Cytoplasmic segment spans residues 171-187 (NSGIMGDVTTRAERGGY). Residues 188-208 (VGYVAGFQVLGSAFGALIGAG) traverse the membrane as a helical segment. Residues 209-216 (LSSRWGWR) are Extracellular-facing. A helical transmembrane segment spans residues 217 to 237 (AIFWFLAIGSGICFLASFLIL). Topologically, residues 238–300 (PETKRNISGN…APFKILKAYE (63 aa)) are cytoplasmic. The chain crosses the membrane as a helical span at residues 301 to 321 (ICILMLVAGLQFAMYTTHLTA). Topologically, residues 322 to 333 (LSTALSKQYHLT) are extracellular. Residues 334 to 354 (VAKVGLCYLPSGICTLCSIVI) traverse the membrane as a helical segment. Residues 355-413 (AGRYLNWNYRRRLKYYQNWLGKKRSKLLEEHDNDLNLVQRIIENDPKYTFNIFKARLQP) are Cytoplasmic-facing. A helical membrane pass occupies residues 414–434 (AFVTLLLSSSGFCAYGWCITV). Residues 435–437 (KAP) lie on the Extracellular side of the membrane. A helical membrane pass occupies residues 438 to 458 (LAAVLCMSGFASLFSNCILTF). The Cytoplasmic segment spans residues 459-472 (STTLIVDLFPTKTS). Residues 473–493 (TATGCLNLFRCILSAVFIAAL) form a helical membrane-spanning segment. Topologically, residues 494 to 503 (SKMVEKMKFG) are extracellular. Residues 504-524 (GVFTFLGALTSSSSILLFILL) form a helical membrane-spanning segment. Residues 525–542 (RKGKELAFKRKKQELGVN) lie on the Cytoplasmic side of the membrane.

This sequence belongs to the major facilitator superfamily. CAR1 family.

The protein localises to the cell membrane. Its function is as follows. Multidrug resistance transporter involved in resistance and adaptation to quinidine and to the herbicide barban (4-chloro-2-butynyl [3-chlorophenyl] carbamate). Implicated in potassium uptake. The sequence is that of Quinidine resistance protein 2 (QDR2) from Saccharomyces cerevisiae (strain ATCC 204508 / S288c) (Baker's yeast).